The chain runs to 105 residues: uncharacterized protein (105 aa).

This is an uncharacterized protein from Haemophilus influenzae (strain ATCC 51907 / DSM 11121 / KW20 / Rd).